A 583-amino-acid polypeptide reads, in one-letter code: Malonate--CoA ligase ACSF3, mitochondrial (583 aa).

Residues 1–27 (MPPHLALPFRRLFWSLASSQLIPRRHR) constitute a mitochondrion transit peptide. ATP contacts are provided by residues 202–210 (TSGTTGRPK), Asp-455, Arg-469, and Lys-561.

The protein belongs to the ATP-dependent AMP-binding enzyme family.

Its subcellular location is the mitochondrion. The catalysed reaction is tetracosanoate + ATP + CoA = tetracosanoyl-CoA + AMP + diphosphate. It carries out the reaction malonate + ATP + CoA = malonyl-CoA + AMP + diphosphate. In terms of biological role, catalyzes the initial reaction in intramitochondrial fatty acid synthesis, by activating malonate and methylmalonate, but not acetate, into their respective CoA thioester. May have some preference toward very-long-chain substrates. The protein is Malonate--CoA ligase ACSF3, mitochondrial of Mus musculus (Mouse).